Consider the following 103-residue polypeptide: Small ribosomal subunit protein uS10 (103 aa).

The protein belongs to the universal ribosomal protein uS10 family. As to quaternary structure, part of the 30S ribosomal subunit.

Its function is as follows. Involved in the binding of tRNA to the ribosomes. The protein is Small ribosomal subunit protein uS10 of Shewanella frigidimarina (strain NCIMB 400).